Consider the following 361-residue polypeptide: Aminomethyltransferase (361 aa).

It belongs to the GcvT family. In terms of assembly, the glycine cleavage system is composed of four proteins: P, T, L and H.

It catalyses the reaction N(6)-[(R)-S(8)-aminomethyldihydrolipoyl]-L-lysyl-[protein] + (6S)-5,6,7,8-tetrahydrofolate = N(6)-[(R)-dihydrolipoyl]-L-lysyl-[protein] + (6R)-5,10-methylene-5,6,7,8-tetrahydrofolate + NH4(+). Its function is as follows. The glycine cleavage system catalyzes the degradation of glycine. This chain is Aminomethyltransferase, found in Bacteroides fragilis (strain ATCC 25285 / DSM 2151 / CCUG 4856 / JCM 11019 / LMG 10263 / NCTC 9343 / Onslow / VPI 2553 / EN-2).